We begin with the raw amino-acid sequence, 343 residues long: Phosphoribosylformylglycinamidine cyclo-ligase (343 aa).

It belongs to the AIR synthase family.

It localises to the cytoplasm. The catalysed reaction is 2-formamido-N(1)-(5-O-phospho-beta-D-ribosyl)acetamidine + ATP = 5-amino-1-(5-phospho-beta-D-ribosyl)imidazole + ADP + phosphate + H(+). It participates in purine metabolism; IMP biosynthesis via de novo pathway; 5-amino-1-(5-phospho-D-ribosyl)imidazole from N(2)-formyl-N(1)-(5-phospho-D-ribosyl)glycinamide: step 2/2. The protein is Phosphoribosylformylglycinamidine cyclo-ligase of Parasynechococcus marenigrum (strain WH8102).